The following is a 109-amino-acid chain: Putative double-stranded DNA mimic protein CKO_01325 (109 aa).

The protein belongs to the putative dsDNA mimic protein family.

Its function is as follows. May act as a double-stranded DNA (dsDNA) mimic. Probably regulates the activity of a dsDNA-binding protein. This Citrobacter koseri (strain ATCC BAA-895 / CDC 4225-83 / SGSC4696) protein is Putative double-stranded DNA mimic protein CKO_01325.